Reading from the N-terminus, the 660-residue chain is Sodium/nucleoside cotransporter 2 (660 aa).

Ser-46 carries the post-translational modification Phosphoserine. A run of 14 helical transmembrane segments spans residues 82–102 (ILLGLLCLAYAAYFLAACILN), 106–125 (ALALFVITCLVIFILACHFL), 150–168 (KRVFVGLSVVGLILWLALD), 174–194 (EQLISFAGICMFILILFACSK), 202–222 (RTVFWGLGLQFIFGILVIRTE), 235–255 (IQIFLAYTVEGSSFVFGDTLV), 262–282 (QSLPIIIFFGCVMSILYYLGL), 297–316 (TMGTTAAETLAVAGNIFVGM), 338–357 (VMTGGFATIAGTVLGAFISF), 364–383 (LISASVMAAPCALALSKLVY), 425–445 (VAANLIAFLAVLAFINATLSW), 456–476 (SFQVICSYVLRPMVFMMGVQW), 531–551 (TTFSLCGFANLSSIGITLGGL), and 569–589 (ALFTGACVSFISACMAGILYV).

This sequence belongs to the concentrative nucleoside transporter (CNT) (TC 2.A.41) family.

It is found in the membrane. It localises to the apicolateral cell membrane. The catalysed reaction is adenosine(out) + Na(+)(out) = adenosine(in) + Na(+)(in). It catalyses the reaction inosine(out) + Na(+)(out) = inosine(in) + Na(+)(in). It carries out the reaction guanosine(out) + Na(+)(out) = guanosine(in) + Na(+)(in). The enzyme catalyses uridine(out) + Na(+)(out) = uridine(in) + Na(+)(in). In terms of biological role, sodium-dependent and purine-selective transporter. Exhibits the transport characteristics of the nucleoside transport system cif or N1 subtype (N1/cif) (selective for purine nucleosides and uridine). Plays a critical role in specific uptake and salvage of purine nucleosides in kidney and other tissues. May contribute to regulate the transport of organic compounds in testes across the blood-testis-barrier. This is Sodium/nucleoside cotransporter 2 (Slc28a2) from Mus musculus (Mouse).